Reading from the N-terminus, the 373-residue chain is Mitochondrial nicotinamide adenine dinucleotide transporter 1 (373 aa).

The Mitochondrial matrix segment spans residues 1 to 80 (MTQTDNPVPN…WVPLSSTQIT (80 aa)). Solcar repeat units follow at residues 75-166 (SSTQ…SKKF), 174-263 (FDFV…LKVR), and 276-364 (INLQ…FRNR). A helical membrane pass occupies residues 81–101 (ALSGAFAGFLSGVAVCPLDVA). At 102–141 (KTRLQAQGLQTRFENPYYRGIMGTLSTIVRDEGPRGLYKG) the chain is on the mitochondrial intermembrane side. A helical transmembrane segment spans residues 142–162 (LVPIVLGYFPTWMIYFSVYEF). The Mitochondrial matrix portion of the chain corresponds to 163-176 (SKKFFHGIFPQFDF). A helical membrane pass occupies residues 177-199 (VAQSCAAITAGAASTTLTNPIWV). Topologically, residues 200–235 (VKTRLMLQSNLGEHPTHYKGTFDAFRKLFYQEGFKA) are mitochondrial intermembrane. Residues 236–256 (LYAGLVPSLLGLFHVAIHFPI) traverse the membrane as a helical segment. The Mitochondrial matrix segment spans residues 257–280 (YEDLKVRFHCYSRENNTNSINLQR). Residues 281–297 (LIMASSVSKMIASAVTY) traverse the membrane as a helical segment. Residues 298–335 (PHEILRTRMQLKSDIPDSIQRRLFPLIKATYAQEGLKG) are Mitochondrial intermembrane-facing. Residues 336-358 (FYSGFTTNLVRTIPASAITLVSF) traverse the membrane as a helical segment. The Mitochondrial matrix portion of the chain corresponds to 359–373 (EYFRNRLENISTMVI).

The protein belongs to the mitochondrial carrier (TC 2.A.29) family.

It localises to the mitochondrion inner membrane. It catalyses the reaction dAMP(in) + NAD(+)(out) = dAMP(out) + NAD(+)(in). The enzyme catalyses dGMP(in) + NAD(+)(out) = dGMP(out) + NAD(+)(in). The catalysed reaction is GMP(in) + NAD(+)(out) = GMP(out) + NAD(+)(in). It carries out the reaction AMP(in) + NAD(+)(out) = AMP(out) + NAD(+)(in). It catalyses the reaction deamido-NAD(+)(in) + NAD(+)(out) = deamido-NAD(+)(out) + NAD(+)(in). In terms of biological role, mitochondrial inner membrane carrier protein that mediates the import of NAD(+) into mitochondria. Can transport NAD(+) by unidirectional transport or by exchange with intramitochondrially generated dAMP and dGMP. Also able to transport NAD(+) by exchange with AMP, GMP or deamido-NAD (+) in vitro. The protein is Mitochondrial nicotinamide adenine dinucleotide transporter 1 (YIA6) of Saccharomyces cerevisiae (strain ATCC 204508 / S288c) (Baker's yeast).